The chain runs to 629 residues: Probable alpha-L-arabinofuranosidase A (629 aa).

A signal peptide spans 1–25; that stretch reads MVALSTLSGLSALPFLFSLVQNVYG. Asn-36, Asn-51, Asn-140, Asn-152, Asn-168, Asn-171, Asn-260, Asn-494, and Asn-534 each carry an N-linked (GlcNAc...) asparagine glycan.

The protein belongs to the glycosyl hydrolase 51 family.

Its subcellular location is the secreted. The catalysed reaction is Hydrolysis of terminal non-reducing alpha-L-arabinofuranoside residues in alpha-L-arabinosides.. The protein operates within glycan metabolism; L-arabinan degradation. Its function is as follows. Alpha-L-arabinofuranosidase involved in the degradation of arabinoxylan, a major component of plant hemicellulose. Acts only on small linear 1,5-alpha-linked L-arabinofuranosyl oligosaccharides. The sequence is that of Probable alpha-L-arabinofuranosidase A (abfA) from Aspergillus oryzae (strain ATCC 42149 / RIB 40) (Yellow koji mold).